The sequence spans 225 residues: Ribonuclease T (225 aa).

Residues 1–21 are disordered; the sequence is MSEDHFDEEHEGHGGGGGSRH. One can recognise an Exonuclease domain in the interval 33–207; sequence VVVDVETGGF…YDTEKTAELF (175 aa). Positions 36, 38, 194, and 199 each coordinate Mg(2+). Histidine 194 serves as the catalytic Proton donor/acceptor.

It belongs to the RNase T family. Homodimer. Requires Mg(2+) as cofactor.

Functionally, trims short 3' overhangs of a variety of RNA species, leaving a one or two nucleotide 3' overhang. Responsible for the end-turnover of tRNA: specifically removes the terminal AMP residue from uncharged tRNA (tRNA-C-C-A). Also appears to be involved in tRNA biosynthesis. The protein is Ribonuclease T of Pseudomonas syringae pv. tomato (strain ATCC BAA-871 / DC3000).